We begin with the raw amino-acid sequence, 158 residues long: D-aminoacyl-tRNA deacylase (158 aa).

The Gly-cisPro motif, important for rejection of L-amino acids motif lies at 144 to 145 (GP).

This sequence belongs to the DTD family. In terms of assembly, homodimer.

The protein resides in the cytoplasm. It catalyses the reaction glycyl-tRNA(Ala) + H2O = tRNA(Ala) + glycine + H(+). The enzyme catalyses a D-aminoacyl-tRNA + H2O = a tRNA + a D-alpha-amino acid + H(+). In terms of biological role, an aminoacyl-tRNA editing enzyme that deacylates mischarged D-aminoacyl-tRNAs. Also deacylates mischarged glycyl-tRNA(Ala), protecting cells against glycine mischarging by AlaRS. Acts via tRNA-based rather than protein-based catalysis; rejects L-amino acids rather than detecting D-amino acids in the active site. By recycling D-aminoacyl-tRNA to D-amino acids and free tRNA molecules, this enzyme counteracts the toxicity associated with the formation of D-aminoacyl-tRNA entities in vivo and helps enforce protein L-homochirality. This Corynebacterium kroppenstedtii (strain DSM 44385 / JCM 11950 / CIP 105744 / CCUG 35717) protein is D-aminoacyl-tRNA deacylase.